An 82-amino-acid polypeptide reads, in one-letter code: ATP synthase subunit c (82 aa).

The next 2 helical transmembrane spans lie at 3-23 (PLVASASVLAAALAIGLASLG) and 57-77 (LAFMESLTIYGLVIALVLLFA).

The protein belongs to the ATPase C chain family. F-type ATPases have 2 components, F(1) - the catalytic core - and F(0) - the membrane proton channel. F(1) has five subunits: alpha(3), beta(3), gamma(1), delta(1), epsilon(1). F(0) has four main subunits: a(1), b(1), b'(1) and c(10-14). The alpha and beta chains form an alternating ring which encloses part of the gamma chain. F(1) is attached to F(0) by a central stalk formed by the gamma and epsilon chains, while a peripheral stalk is formed by the delta, b and b' chains.

The protein resides in the cellular thylakoid membrane. In terms of biological role, f(1)F(0) ATP synthase produces ATP from ADP in the presence of a proton or sodium gradient. F-type ATPases consist of two structural domains, F(1) containing the extramembraneous catalytic core and F(0) containing the membrane proton channel, linked together by a central stalk and a peripheral stalk. During catalysis, ATP synthesis in the catalytic domain of F(1) is coupled via a rotary mechanism of the central stalk subunits to proton translocation. Functionally, key component of the F(0) channel; it plays a direct role in translocation across the membrane. A homomeric c-ring of between 10-14 subunits forms the central stalk rotor element with the F(1) delta and epsilon subunits. This is ATP synthase subunit c from Synechococcus sp. (strain PCC 6716).